We begin with the raw amino-acid sequence, 70 residues long: MILYPSIVDLMEKVDSKYTLCSLVAKRARQLIAGDTKLVDIDSDKPVTIATEEVNNGLITYQRPQKYGIK.

This sequence belongs to the RNA polymerase subunit omega family. In terms of assembly, the RNAP catalytic core consists of 2 alpha, 1 beta, 1 beta' and 1 omega subunit. When a sigma factor is associated with the core the holoenzyme is formed, which can initiate transcription.

It catalyses the reaction RNA(n) + a ribonucleoside 5'-triphosphate = RNA(n+1) + diphosphate. Functionally, promotes RNA polymerase assembly. Latches the N- and C-terminal regions of the beta' subunit thereby facilitating its interaction with the beta and alpha subunits. The protein is DNA-directed RNA polymerase subunit omega of Thermoanaerobacter sp. (strain X514).